The following is a 604-amino-acid chain: UvrABC system protein C (604 aa).

The 80-residue stretch at 10–89 folds into the GIY-YIG domain; that stretch reads ELPGVYLMKD…VKKNRPHYNI (80 aa). A UVR domain is found at 199–234; that stretch reads SGTIKELQEKMNIHAIAQEYESAAVIRDQIDALKSL.

The protein belongs to the UvrC family. In terms of assembly, interacts with UvrB in an incision complex.

The protein localises to the cytoplasm. Functionally, the UvrABC repair system catalyzes the recognition and processing of DNA lesions. UvrC both incises the 5' and 3' sides of the lesion. The N-terminal half is responsible for the 3' incision and the C-terminal half is responsible for the 5' incision. In Methanococcoides burtonii (strain DSM 6242 / NBRC 107633 / OCM 468 / ACE-M), this protein is UvrABC system protein C.